Here is a 59-residue protein sequence, read N- to C-terminus: Large ribosomal subunit protein bL32 (59 aa).

The segment covering 1 to 15 (MANPKRKQSKRRSAN) has biased composition (basic residues). Residues 1-48 (MANPKRKQSKRRSANRRAANAFIAPEFAKDPTDGSAFRPHRVNPKNGM) are disordered.

Belongs to the bacterial ribosomal protein bL32 family.

The chain is Large ribosomal subunit protein bL32 from Opitutus terrae (strain DSM 11246 / JCM 15787 / PB90-1).